Consider the following 837-residue polypeptide: Dapper homolog 2 (837 aa).

Positions 65-113 form a coiled coil; it reads ENVSKEELRLEATLSLLKQQLTRLRRQDVGLKTHLQQLDQQITELKLDV. 5 disordered regions span residues 189-265, 424-497, 512-564, 600-649, and 738-782; these read ADES…PKYQ, HGKH…DKSS, GSQR…KQSG, QQIP…HTQR, and EMSD…EDEG. Polar residues-rich tracts occupy residues 246-265 and 432-445; these read VKSS…PKYQ and LDLQ…NNTA. Basic and acidic residues-rich tracts occupy residues 456–466, 486–496, and 548–560; these read ASEKRSGHFPK, EGSRASCHDKS, and LSRE…RTDL. Residues 741–759 show a composition bias toward polar residues; that stretch reads DYTTNRFGDSESSQGSQTA. Over residues 768-782 the composition is skewed to acidic residues; sequence LDEEDLLEEEEEDEG. The short motif at 834-837 is the PDZ-binding element; sequence MTLV.

This sequence belongs to the dapper family. As to quaternary structure, interacts with dvl2.

It is found in the cytoplasm. Its subcellular location is the late endosome. The protein resides in the nucleus. It localises to the cell membrane. Functionally, involved in regulation of intracellular signaling pathways during development. Specifically thought to play a role in canonical and/or non-canonical Wnt signaling pathways through interaction with DSH (Dishevelled) family proteins. Positive regulator of the Wnt signaling pathway which acts downstream of wnt1 indicative for non-canonical Wnt signaling. Also negatively regulates the Nodal signaling pathway, possibly by promoting the lysosomal degradation of Nodal receptors. Required for convergent extension movements in gastrulation. This chain is Dapper homolog 2 (dact2), found in Danio rerio (Zebrafish).